Reading from the N-terminus, the 337-residue chain is DNA-directed RNA polymerase subunit alpha (337 aa).

The segment at 1–232 (MVREEVRVCT…IDLFIPFLHA (232 aa)) is alpha N-terminal domain (alpha-NTD). Residues 266–337 (EISFQCIFID…FAIDLPKNKF (72 aa)) are alpha C-terminal domain (alpha-CTD).

Belongs to the RNA polymerase alpha chain family. In plastids the minimal PEP RNA polymerase catalytic core is composed of four subunits: alpha, beta, beta', and beta''. When a (nuclear-encoded) sigma factor is associated with the core the holoenzyme is formed, which can initiate transcription.

The protein resides in the plastid. It localises to the chloroplast. The enzyme catalyses RNA(n) + a ribonucleoside 5'-triphosphate = RNA(n+1) + diphosphate. Its function is as follows. DNA-dependent RNA polymerase catalyzes the transcription of DNA into RNA using the four ribonucleoside triphosphates as substrates. The protein is DNA-directed RNA polymerase subunit alpha of Buxus microphylla (Littleleaf boxwood).